The primary structure comprises 87 residues: uncharacterized protein (87 aa).

The helical transmembrane segment at Asp-44–Phe-64 threads the bilayer.

The protein belongs to the SPP1 holin family.

It is found in the membrane. This is an uncharacterized protein from Bacillus licheniformis.